The chain runs to 217 residues: Pyridoxine/pyridoxamine 5'-phosphate oxidase (217 aa).

Residues 13 to 16 and lysine 71 contribute to the substrate site; that span reads RREY. Residues 66-71, 81-82, arginine 87, lysine 88, and glutamine 110 each bind FMN; these read RIVLLK and YT. Residues tyrosine 128, arginine 132, and serine 136 each coordinate substrate. Residues 145–146 and tryptophan 190 each bind FMN; that span reads QS. 196–198 contacts substrate; that stretch reads RLH. Position 200 (arginine 200) interacts with FMN.

It belongs to the pyridoxamine 5'-phosphate oxidase family. Homodimer. FMN serves as cofactor.

It catalyses the reaction pyridoxamine 5'-phosphate + O2 + H2O = pyridoxal 5'-phosphate + H2O2 + NH4(+). It carries out the reaction pyridoxine 5'-phosphate + O2 = pyridoxal 5'-phosphate + H2O2. Its pathway is cofactor metabolism; pyridoxal 5'-phosphate salvage; pyridoxal 5'-phosphate from pyridoxamine 5'-phosphate: step 1/1. The protein operates within cofactor metabolism; pyridoxal 5'-phosphate salvage; pyridoxal 5'-phosphate from pyridoxine 5'-phosphate: step 1/1. Functionally, catalyzes the oxidation of either pyridoxine 5'-phosphate (PNP) or pyridoxamine 5'-phosphate (PMP) into pyridoxal 5'-phosphate (PLP). The protein is Pyridoxine/pyridoxamine 5'-phosphate oxidase of Yersinia pestis bv. Antiqua (strain Antiqua).